A 427-amino-acid polypeptide reads, in one-letter code: Trigger factor (427 aa).

One can recognise a PPIase FKBP-type domain in the interval 163–248 (GDTVVIDFVG…IHEVKAKEVP (86 aa)).

This sequence belongs to the FKBP-type PPIase family. Tig subfamily.

It localises to the cytoplasm. It catalyses the reaction [protein]-peptidylproline (omega=180) = [protein]-peptidylproline (omega=0). Its function is as follows. Involved in protein export. Acts as a chaperone by maintaining the newly synthesized protein in an open conformation. Functions as a peptidyl-prolyl cis-trans isomerase. The chain is Trigger factor from Streptococcus pneumoniae (strain 70585).